The following is a 412-amino-acid chain: Cathepsin D (412 aa).

The first 20 residues, 1–20, serve as a signal peptide directing secretion; sequence MQPSSLLPLALCLLAAPASA. Positions 21–64 are cleaved as a propeptide — activation peptide; sequence LVRIPLHKFTSIRRTMSEVGGSVEDLIAKGPVSKYSQAVPAVTE. The O-linked (GalNAc...) threonine glycan is linked to Thr63. Positions 79 to 407 constitute a Peptidase A1 domain; that stretch reads YYGEIGIGTP…DRDNNRVGFA (329 aa). 2 disulfide bridges follow: Cys91-Cys160 and Cys110-Cys117. The active site involves Asp97. Asn134 and Asn263 each carry an N-linked (GlcNAc...) asparagine glycan. Cys286 and Cys290 are disulfide-bonded. The active site involves Asp295. Cys329 and Cys366 are joined by a disulfide.

Belongs to the peptidase A1 family. As to quaternary structure, consists of a light chain and a heavy chain. Interacts with ADAM30; this leads to activation of CTSD. Interacts with GRN; stabilizes CTSD; increases its proteolytic activity. In terms of processing, N- and O-glycosylated. Post-translationally, undergoes proteolytic cleavage and activation by ADAM30. As well as the major heavy chain which starts at Leu-169, 2 minor forms starting at Gly-170 and Gly-171 have been identified. An additional form starting at Ala-168 has also been identified. As to expression, expressed in the aorta extracellular space (at protein level). Expressed in liver (at protein level).

The protein resides in the lysosome. It localises to the melanosome. The protein localises to the secreted. Its subcellular location is the extracellular space. It carries out the reaction Specificity similar to, but narrower than, that of pepsin A. Does not cleave the 4-Gln-|-His-5 bond in B chain of insulin.. Functionally, acid protease active in intracellular protein breakdown. Plays a role in APP processing following cleavage and activation by ADAM30 which leads to APP degradation. Involved in the pathogenesis of several diseases such as breast cancer and possibly Alzheimer disease. This is Cathepsin D (CTSD) from Homo sapiens (Human).